The chain runs to 248 residues: 4-hydroxy-tetrahydrodipicolinate reductase (248 aa).

Residues 74–76 (GTT) and 99–102 (SANF) each bind NAD(+). Residue His134 is the Proton donor/acceptor of the active site. A (S)-2,3,4,5-tetrahydrodipicolinate-binding site is contributed by His135. The active-site Proton donor is Lys138. Position 144–145 (144–145 (GT)) interacts with (S)-2,3,4,5-tetrahydrodipicolinate.

Belongs to the DapB family.

It is found in the cytoplasm. It catalyses the reaction (S)-2,3,4,5-tetrahydrodipicolinate + NAD(+) + H2O = (2S,4S)-4-hydroxy-2,3,4,5-tetrahydrodipicolinate + NADH + H(+). It carries out the reaction (S)-2,3,4,5-tetrahydrodipicolinate + NADP(+) + H2O = (2S,4S)-4-hydroxy-2,3,4,5-tetrahydrodipicolinate + NADPH + H(+). It functions in the pathway amino-acid biosynthesis; L-lysine biosynthesis via DAP pathway; (S)-tetrahydrodipicolinate from L-aspartate: step 4/4. Catalyzes the conversion of 4-hydroxy-tetrahydrodipicolinate (HTPA) to tetrahydrodipicolinate. In Chlorobium phaeobacteroides (strain BS1), this protein is 4-hydroxy-tetrahydrodipicolinate reductase.